The primary structure comprises 356 residues: S-adenosylmethionine:tRNA ribosyltransferase-isomerase (356 aa).

It belongs to the QueA family. Monomer.

The protein resides in the cytoplasm. The catalysed reaction is 7-aminomethyl-7-carbaguanosine(34) in tRNA + S-adenosyl-L-methionine = epoxyqueuosine(34) in tRNA + adenine + L-methionine + 2 H(+). The protein operates within tRNA modification; tRNA-queuosine biosynthesis. Functionally, transfers and isomerizes the ribose moiety from AdoMet to the 7-aminomethyl group of 7-deazaguanine (preQ1-tRNA) to give epoxyqueuosine (oQ-tRNA). This chain is S-adenosylmethionine:tRNA ribosyltransferase-isomerase, found in Yersinia pseudotuberculosis serotype IB (strain PB1/+).